A 928-amino-acid chain; its full sequence is Nitrogen network kinase 1 (928 aa).

The segment covering 1 to 12 (MFTSQRQLRQNG) has biased composition (polar residues). Disordered stretches follow at residues 1–43 (MFTS…SYGR) and 81–118 (HEHP…LELG). Residues 13–29 (SPMSSSRSSQHSSGTAS) show a composition bias toward low complexity. 2 stretches are compositionally biased toward polar residues: residues 30 to 40 (PISDSPASNRS) and 86 to 107 (RSTL…SQVN). Phosphoserine is present on residues serine 178 and serine 179. The interval 374 to 394 (ANDDNINSRNTPNNSNDTYVN) is disordered. Positions 375 to 391 (NDDNINSRNTPNNSNDT) are enriched in low complexity. Serine 405 and serine 426 each carry phosphoserine. Residues 449–912 (HRLGKIIGFG…WKLKRIEEVL (464 aa)) enclose the Protein kinase domain. Residues 455-463 (IGFGAWGII) and lysine 478 each bind ATP. Aspartate 580 acts as the Proton acceptor in catalysis. Disordered stretches follow at residues 670–741 (ENRK…KYIG) and 767–813 (YDSP…SGSS). Positions 683 to 696 (VSSSSHSLKHLNQP) are enriched in polar residues. A Phosphoserine modification is found at serine 737. Phosphotyrosine is present on tyrosine 739. Positions 769–813 (SPDSSQSEISAASSSSSNLSSLSSSTKASAVTNSGVTTSSPSGSS) are enriched in low complexity.

The protein belongs to the protein kinase superfamily. Ser/Thr protein kinase family. In terms of assembly, interacts with URE2 and GDH2. Also interacts with the TORC1 kinase complex.

Its subcellular location is the cytoplasm. The enzyme catalyses L-seryl-[protein] + ATP = O-phospho-L-seryl-[protein] + ADP + H(+). It catalyses the reaction L-threonyl-[protein] + ATP = O-phospho-L-threonyl-[protein] + ADP + H(+). Its function is as follows. Serine/threonine-protein kinase involved in the phosphorylation of the NAD(+)-dependent glutamate dehydrogenase GDH2. When overexpressed, confers hypersensitivity to rapamycin and induces rapid nuclear accumulation of GLN3 to activate the transcription of nitrogen-regulated genes. This is Nitrogen network kinase 1 (NNK1) from Saccharomyces cerevisiae (strain ATCC 204508 / S288c) (Baker's yeast).